The chain runs to 172 residues: Ubiquitin-conjugating enzyme E2 PEX4 (172 aa).

The UBC core domain occupies 14-167 (SASKRLIKEL…VELWCQDSDS (154 aa)). Cys-104 functions as the Glycyl thioester intermediate in the catalytic mechanism.

The protein belongs to the ubiquitin-conjugating enzyme family.

The catalysed reaction is S-ubiquitinyl-[E1 ubiquitin-activating enzyme]-L-cysteine + [E2 ubiquitin-conjugating enzyme]-L-cysteine = [E1 ubiquitin-activating enzyme]-L-cysteine + S-ubiquitinyl-[E2 ubiquitin-conjugating enzyme]-L-cysteine.. It functions in the pathway protein modification; protein ubiquitination. Its function is as follows. Ubiquitin-conjugating enzyme E2 that is essential for peroxisome biogenesis and plays a key role in development, pathogenicity, and cell wall integrity. Required for long and very long-chain fatty acid utilization and is involved in lipid droplet accumulation and the elimination of reactive oxygen species. Controls the expression of proteins involved in protein biosynthesis, fatty acid metabolism, cell wall synthesis, oxidation-reduction reactions, as well as of the enzymes involved in the biosynthesis of the mycotoxin deoxynivalenol (DON), including TRI5, TRI6, and TRI10. The chain is Ubiquitin-conjugating enzyme E2 PEX4 from Gibberella zeae (strain ATCC MYA-4620 / CBS 123657 / FGSC 9075 / NRRL 31084 / PH-1) (Wheat head blight fungus).